Consider the following 678-residue polypeptide: Glycine--tRNA ligase beta subunit (678 aa).

It belongs to the class-II aminoacyl-tRNA synthetase family. As to quaternary structure, tetramer of two alpha and two beta subunits.

The protein resides in the cytoplasm. It catalyses the reaction tRNA(Gly) + glycine + ATP = glycyl-tRNA(Gly) + AMP + diphosphate. In Streptococcus pneumoniae (strain 70585), this protein is Glycine--tRNA ligase beta subunit.